A 179-amino-acid polypeptide reads, in one-letter code: Ribosome maturation factor RimM (179 aa).

One can recognise a PRC barrel domain in the interval D102–F179.

Belongs to the RimM family. In terms of assembly, binds ribosomal protein uS19.

It is found in the cytoplasm. Functionally, an accessory protein needed during the final step in the assembly of 30S ribosomal subunit, possibly for assembly of the head region. Essential for efficient processing of 16S rRNA. May be needed both before and after RbfA during the maturation of 16S rRNA. It has affinity for free ribosomal 30S subunits but not for 70S ribosomes. The protein is Ribosome maturation factor RimM of Pseudomonas syringae pv. tomato (strain ATCC BAA-871 / DC3000).